A 339-amino-acid polypeptide reads, in one-letter code: Anthranilate phosphoribosyltransferase (339 aa).

Residues Gly-81, 84 to 85 (GD), Thr-89, 91 to 94 (NIST), 109 to 117 (KHGNRNLSS), and Thr-121 each bind 5-phospho-alpha-D-ribose 1-diphosphate. Gly-81 provides a ligand contact to anthranilate. Mg(2+) is bound at residue Ser-93. Asn-112 contacts anthranilate. Arg-167 is an anthranilate binding site. The Mg(2+) site is built by Asp-226 and Glu-227.

It belongs to the anthranilate phosphoribosyltransferase family. In terms of assembly, homodimer. Requires Mg(2+) as cofactor.

The catalysed reaction is N-(5-phospho-beta-D-ribosyl)anthranilate + diphosphate = 5-phospho-alpha-D-ribose 1-diphosphate + anthranilate. It functions in the pathway amino-acid biosynthesis; L-tryptophan biosynthesis; L-tryptophan from chorismate: step 2/5. Functionally, catalyzes the transfer of the phosphoribosyl group of 5-phosphorylribose-1-pyrophosphate (PRPP) to anthranilate to yield N-(5'-phosphoribosyl)-anthranilate (PRA). This Ruegeria pomeroyi (strain ATCC 700808 / DSM 15171 / DSS-3) (Silicibacter pomeroyi) protein is Anthranilate phosphoribosyltransferase.